A 193-amino-acid polypeptide reads, in one-letter code: Epididymal-specific lipocalin-12 (193 aa).

An N-terminal signal peptide occupies residues 1–19 (MGPWWALWLILTLPQILGG). A disulfide bond links Cys88 and Cys193. N-linked (GlcNAc...) asparagine glycans are attached at residues Asn143 and Asn172.

Belongs to the calycin superfamily. Lipocalin family. As to quaternary structure, monomer.

The protein localises to the secreted. In terms of biological role, binds all-trans retinoic acid and may act as a retinoid carrier protein within the epididymis. May play a role in male fertility. This is Epididymal-specific lipocalin-12 (Lcn12) from Rattus norvegicus (Rat).